A 543-amino-acid polypeptide reads, in one-letter code: Sarafotoxin (543 aa).

The N-terminal stretch at 1 to 23 (MALLPRLAAGGLLLLLALAALEG) is a signal peptide. Residues 24 to 69 (KPAPSALSQLLEKRSEDQAAAGRIIDGGDTKQAARDPSPQRNVEPL) constitute a propeptide that is removed on maturation. A disordered region spans residues 45–65 (GRIIDGGDTKQAARDPSPQRN). 12 repeat units span residues 51-90 (GDTKQAARDPSPQRNVEPLCSCKDMSDKECLNFCHQDVIW), 91-130 (RDTKQAARDPSPQRNVEPLCTCNDMTDEECLNFCHQDVIW), 131-170 (RDTKQAARDPSPQRNVEPLCSCKDMTDKECLYFCHQDVIW), 171-210 (RDTKQAARDPSPQRNVEPLCTCNDMTDEECLNFCHQDVIW), 211-250 (RDTKQAARDPSPQRNVEPLCTCNDMTDEECLNFCHQDVIW), 251-290 (RDTKQAARDPSPQRNVEPLCTCKDMTDKECLYFCHQGIIW), 291-330 (RDTKQAARDPSPQRNVEPLCSCKDMSDKECLNFCHQDVIW), 331-370 (RDTKQAARDPSPQRNVEPLCTCNDMTDEECLNFCHQDVIW), 371-410 (RDTKQAARDPSPQRNVEPLCTCNDMTDEECLNFCHQDVIW), 411-450 (RDTKQAARDPSPQRNVEPLCSCKDMTDKECLYFCHQDVIW), 451-490 (RDTKQAARDPSPQRNVEPLCSCKDMSDKECLNFCHQDVIW), and 491-530 (RDTKQAARDPSPQRNVEPLCSCKDMTDKECLNFCHQDVIW). Residues 51 to 530 (GDTKQAARDP…LNFCHQDVIW (480 aa)) form a 12 X 40 AA tandem repeats region. 2 disulfides stabilise this stretch: cysteine 70–cysteine 84 and cysteine 72–cysteine 80. Residues 92 to 109 (DTKQAARDPSPQRNVEPL) constitute a propeptide that is removed on maturation. Disulfide bonds link cysteine 110/cysteine 124 and cysteine 112/cysteine 120. A propeptide spanning residues 132 to 149 (DTKQAARDPSPQRNVEPL) is cleaved from the precursor. Intrachain disulfides connect cysteine 150/cysteine 164 and cysteine 152/cysteine 160. The propeptide occupies 172–189 (DTKQAARDPSPQRNVEPL). 2 cysteine pairs are disulfide-bonded: cysteine 190–cysteine 204 and cysteine 192–cysteine 200. Positions 212-229 (DTKQAARDPSPQRNVEPL) are excised as a propeptide. Disulfide bonds link cysteine 230–cysteine 244 and cysteine 232–cysteine 240. A propeptide spanning residues 252–269 (DTKQAARDPSPQRNVEPL) is cleaved from the precursor. 2 cysteine pairs are disulfide-bonded: cysteine 270–cysteine 284 and cysteine 272–cysteine 280. Positions 292-309 (DTKQAARDPSPQRNVEPL) are excised as a propeptide. 2 disulfide bridges follow: cysteine 310–cysteine 324 and cysteine 312–cysteine 320. The propeptide occupies 332-349 (DTKQAARDPSPQRNVEPL). 2 disulfides stabilise this stretch: cysteine 350–cysteine 364 and cysteine 352–cysteine 360. Residues 372–389 (DTKQAARDPSPQRNVEPL) constitute a propeptide that is removed on maturation. Intrachain disulfides connect cysteine 390–cysteine 404 and cysteine 392–cysteine 400. A propeptide spanning residues 412 to 429 (DTKQAARDPSPQRNVEPL) is cleaved from the precursor. 2 disulfides stabilise this stretch: cysteine 430–cysteine 444 and cysteine 432–cysteine 440. Positions 452–469 (DTKQAARDPSPQRNVEPL) are excised as a propeptide. 2 disulfides stabilise this stretch: cysteine 470-cysteine 484 and cysteine 472-cysteine 480. Positions 492 to 509 (DTKQAARDPSPQRNVEPL) are excised as a propeptide. 2 disulfide bridges follow: cysteine 510/cysteine 524 and cysteine 512/cysteine 520. A propeptide spanning residues 532–543 (NADTSANPEFLG) is cleaved from the precursor.

This sequence belongs to the endothelin/sarafotoxin family. In terms of tissue distribution, expressed by the venom gland.

The protein localises to the secreted. Vasoconstrictor activity. These toxins cause cardiac arrest probably as a result of coronary vasospasm. In terms of biological role, vasoconstrictor activity. Causes cardiac arrest probably as a result of coronary vasospasm. Displays high agonistic activities towards endothelin-2 receptor (EDNRB) (displays affinity in the picomolar range) and endothelin-1 receptor (EDNRA) (lower affinities). The polypeptide is Sarafotoxin (Atractaspis engaddensis (Israeli burrowing asp)).